Here is a 311-residue protein sequence, read N- to C-terminus: Aspartate carbamoyltransferase catalytic subunit (311 aa).

Carbamoyl phosphate is bound by residues R55 and T56. K85 lines the L-aspartate pocket. Positions 106, 135, and 138 each coordinate carbamoyl phosphate. L-aspartate-binding residues include R168 and R230. Residues L268 and P269 each contribute to the carbamoyl phosphate site.

The protein belongs to the aspartate/ornithine carbamoyltransferase superfamily. ATCase family. In terms of assembly, heterododecamer (2C3:3R2) of six catalytic PyrB chains organized as two trimers (C3), and six regulatory PyrI chains organized as three dimers (R2).

It catalyses the reaction carbamoyl phosphate + L-aspartate = N-carbamoyl-L-aspartate + phosphate + H(+). It functions in the pathway pyrimidine metabolism; UMP biosynthesis via de novo pathway; (S)-dihydroorotate from bicarbonate: step 2/3. In terms of biological role, catalyzes the condensation of carbamoyl phosphate and aspartate to form carbamoyl aspartate and inorganic phosphate, the committed step in the de novo pyrimidine nucleotide biosynthesis pathway. The chain is Aspartate carbamoyltransferase catalytic subunit from Escherichia coli (strain 55989 / EAEC).